The primary structure comprises 169 residues: Crossover junction endodeoxyribonuclease RuvC (169 aa).

Active-site residues include Asp-11, Glu-71, and Asp-143. Positions 11, 71, and 143 each coordinate Mg(2+).

Belongs to the RuvC family. In terms of assembly, homodimer which binds Holliday junction (HJ) DNA. The HJ becomes 2-fold symmetrical on binding to RuvC with unstacked arms; it has a different conformation from HJ DNA in complex with RuvA. In the full resolvosome a probable DNA-RuvA(4)-RuvB(12)-RuvC(2) complex forms which resolves the HJ. Mg(2+) serves as cofactor.

It is found in the cytoplasm. The catalysed reaction is Endonucleolytic cleavage at a junction such as a reciprocal single-stranded crossover between two homologous DNA duplexes (Holliday junction).. In terms of biological role, the RuvA-RuvB-RuvC complex processes Holliday junction (HJ) DNA during genetic recombination and DNA repair. Endonuclease that resolves HJ intermediates. Cleaves cruciform DNA by making single-stranded nicks across the HJ at symmetrical positions within the homologous arms, yielding a 5'-phosphate and a 3'-hydroxyl group; requires a central core of homology in the junction. The consensus cleavage sequence is 5'-(A/T)TT(C/G)-3'. Cleavage occurs on the 3'-side of the TT dinucleotide at the point of strand exchange. HJ branch migration catalyzed by RuvA-RuvB allows RuvC to scan DNA until it finds its consensus sequence, where it cleaves and resolves the cruciform DNA. The chain is Crossover junction endodeoxyribonuclease RuvC from Allorhizobium ampelinum (strain ATCC BAA-846 / DSM 112012 / S4) (Agrobacterium vitis (strain S4)).